Consider the following 76-residue polypeptide: Defensin-like protein 125 (76 aa).

The first 25 residues, 1–25 (MTKAITLAIFMVVLVLGMVTKETQG), serve as a signal peptide directing secretion. 4 disulfide bridges follow: C30/C74, C41/C60, C46/C68, and C50/C70.

The protein belongs to the DEFL family.

It is found in the secreted. The polypeptide is Defensin-like protein 125 (LCR54) (Arabidopsis thaliana (Mouse-ear cress)).